A 480-amino-acid polypeptide reads, in one-letter code: MSKRAAEETVEFNSKNGPGQRGTVADNVDTEMGEFEDAYEDEIESEEEYIEADGEKDNGMDEEEQNDAQPSKIPWLPGGKINADEKLVADPSVYEMLHNIQVKWPFLSFDILQDSLGEERRAWPHQMYLVGGSQALDSNDNELTVMKLSQLYKTQHDENDDASDNSDVEEDPILEHKSISTKGACNRVRSARRPANSSKESLLASFHETGKVHIWDIAPHLRSLDSPGVMVSRKENSPLYTVNRHKTEGYALDWSPFEYSLLSGDNANEIFLTKYSNGGWQTDSSPFLSHTAAVEDLQWSPSEKNVFSSCSCDGTFRIWDVRNKQKTSALTVNAHPGVDVNVLSWNTRVPNLLATGADNGVWSVWDLRSLKSSSSVATPVASFKWHRAPIYSIEWHPNEDSVIGVVGADNQISLWDLSVELDEEEQDSRAAEGLQDVPPQLMFIHMGQQEIKEMHWHRQIPGTIVSTAMTGINVFKTITF.

2 disordered regions span residues 1-78 and 155-176; these read MSKR…WLPG and QHDE…ILEH. 2 stretches are compositionally biased toward acidic residues: residues 28–52 and 158–172; these read VDTE…YIEA and ENDD…EEDP. Serine 163 and serine 166 each carry phosphoserine. WD repeat units follow at residues 183-225, 289-329, 334-375, 385-425, and 446-480; these read GACN…RSLD, SHTA…KTSA, AHPG…SSSS, WHRA…DEEE, and MGQQ…TITF.

As to quaternary structure, associates with ribosomal protein L3.

It is found in the cytoplasm. Its subcellular location is the nucleus. The protein resides in the nucleolus. Its function is as follows. Involved in regulation of L3 expression and stability and plays a role in early 60S ribosomal subunit assembly. May be required for proper assembly of pre-ribosomal particles during early ribosome biogenesis, presumably by targeting L3 onto the 35S precursor rRNA. This chain is Ribosome assembly protein rrb1 (rrb1), found in Schizosaccharomyces pombe (strain 972 / ATCC 24843) (Fission yeast).